The primary structure comprises 79 residues: TALLLAAHYTADTSLAFASVTHMCRNVQFGWLIRNLHANGASFFFICIYLHIGRGLYYGSYLNKETWNIGVILLLTLMA.

A run of 3 helical transmembrane segments spans residues 1 to 7 (TALLLAA), 31 to 52 (WLIRNLHANGASFFFICIYLHI), and 67 to 79 (WNIGVILLLTLMA). Heme b contacts are provided by histidine 37 and histidine 51.

It belongs to the cytochrome b family. The cytochrome bc1 complex contains 11 subunits: 3 respiratory subunits (MT-CYB, CYC1 and UQCRFS1), 2 core proteins (UQCRC1 and UQCRC2) and 6 low-molecular weight proteins (UQCRH/QCR6, UQCRB/QCR7, UQCRQ/QCR8, UQCR10/QCR9, UQCR11/QCR10 and a cleavage product of UQCRFS1). This cytochrome bc1 complex then forms a dimer. The cofactor is heme b.

Its subcellular location is the mitochondrion inner membrane. Its function is as follows. Component of the ubiquinol-cytochrome c reductase complex (complex III or cytochrome b-c1 complex) that is part of the mitochondrial respiratory chain. The b-c1 complex mediates electron transfer from ubiquinol to cytochrome c. Contributes to the generation of a proton gradient across the mitochondrial membrane that is then used for ATP synthesis. The protein is Cytochrome b (MT-CYB) of Pomatostomus superciliosus (White-browed babbler).